Reading from the N-terminus, the 191-residue chain is Flavin prenyltransferase UbiX (191 aa).

FMN-binding positions include glycine 13–serine 15, threonine 39, threonine 90–threonine 93, and arginine 125. Residues tyrosine 155 and lysine 171 each contribute to the dimethylallyl phosphate site.

This sequence belongs to the UbiX/PAD1 family.

It carries out the reaction dimethylallyl phosphate + FMNH2 = prenylated FMNH2 + phosphate. Its function is as follows. Flavin prenyltransferase that catalyzes the synthesis of the prenylated FMN cofactor (prenyl-FMN) for 4-hydroxy-3-polyprenylbenzoic acid decarboxylase UbiD. The prenyltransferase is metal-independent and links a dimethylallyl moiety from dimethylallyl monophosphate (DMAP) to the flavin N5 and C6 atoms of FMN. This Methanothermobacter thermautotrophicus (strain ATCC 29096 / DSM 1053 / JCM 10044 / NBRC 100330 / Delta H) (Methanobacterium thermoautotrophicum) protein is Flavin prenyltransferase UbiX.